A 364-amino-acid polypeptide reads, in one-letter code: 1-aminocyclopropane-1-carboxylate oxidase homolog 11 (364 aa).

One can recognise a Fe2OG dioxygenase domain in the interval K213 to S312. Fe cation contacts are provided by H237, D239, and H293. 2-oxoglutarate is bound at residue R303.

Belongs to the iron/ascorbate-dependent oxidoreductase family. Fe(2+) serves as cofactor.

The sequence is that of 1-aminocyclopropane-1-carboxylate oxidase homolog 11 from Arabidopsis thaliana (Mouse-ear cress).